We begin with the raw amino-acid sequence, 448 residues long: Histidine--tRNA ligase (448 aa).

Disordered stretches follow at residues 1–20 (MAIKRPKGTQDHLPDGSPKL) and 428–448 (AGQADQHSPAIPHDPTPQEKA).

This sequence belongs to the class-II aminoacyl-tRNA synthetase family. Homodimer.

It is found in the cytoplasm. It catalyses the reaction tRNA(His) + L-histidine + ATP = L-histidyl-tRNA(His) + AMP + diphosphate + H(+). In Deinococcus deserti (strain DSM 17065 / CIP 109153 / LMG 22923 / VCD115), this protein is Histidine--tRNA ligase.